The sequence spans 281 residues: Energy-coupling factor transporter ATP-binding protein EcfA2 (281 aa).

The region spanning 3-242 (IKVTGLTYVY…TETLEEIGLA (240 aa)) is the ABC transporter domain. 40-47 (GHTGSGKS) lines the ATP pocket.

It belongs to the ABC transporter superfamily. Energy-coupling factor EcfA family. As to quaternary structure, forms a stable energy-coupling factor (ECF) transporter complex composed of 2 membrane-embedded substrate-binding proteins (S component), 2 ATP-binding proteins (A component) and 2 transmembrane proteins (T component).

Its subcellular location is the cell membrane. Its function is as follows. ATP-binding (A) component of a common energy-coupling factor (ECF) ABC-transporter complex. Unlike classic ABC transporters this ECF transporter provides the energy necessary to transport a number of different substrates. This is Energy-coupling factor transporter ATP-binding protein EcfA2 from Acetivibrio thermocellus (strain ATCC 27405 / DSM 1237 / JCM 9322 / NBRC 103400 / NCIMB 10682 / NRRL B-4536 / VPI 7372) (Clostridium thermocellum).